A 117-amino-acid polypeptide reads, in one-letter code: Prefoldin subunit beta (117 aa).

Belongs to the prefoldin subunit beta family. As to quaternary structure, heterohexamer of two alpha and four beta subunits.

Its subcellular location is the cytoplasm. Its function is as follows. Molecular chaperone capable of stabilizing a range of proteins. Seems to fulfill an ATP-independent, HSP70-like function in archaeal de novo protein folding. This chain is Prefoldin subunit beta, found in Thermococcus gammatolerans (strain DSM 15229 / JCM 11827 / EJ3).